A 145-amino-acid chain; its full sequence is Histone H2B.7 (145 aa).

The span at 1–30 (MAPKAEKKPAEKKPVEEKSKAEKAPAEKKP) shows a compositional bias: basic and acidic residues. The disordered stretch occupies residues 1-53 (MAPKAEKKPAEKKPVEEKSKAEKAPAEKKPKAGKKLPKEAGAGGDKKKKMKKK). Ala2 bears the N,N,N-trimethylalanine; alternate mark. Residue Ala2 is modified to N,N-dimethylalanine; alternate. The residue at position 2 (Ala2) is an N-methylalanine; alternate. An N6-methyllysine; partial modification is found at Lys4. N6-acetyllysine occurs at positions 7 and 12. An N6,N6-dimethyllysine modification is found at Lys13. Residues Lys23, Lys28, and Lys34 each carry the N6-acetyllysine modification. N6-acetyllysine; partial is present on Lys35. Lys141 participates in a covalent cross-link: Glycyl lysine isopeptide (Lys-Gly) (interchain with G-Cter in ubiquitin).

The protein belongs to the histone H2B family. As to quaternary structure, the nucleosome is a histone octamer containing two molecules each of H2A, H2B, H3 and H4 assembled in one H3-H4 heterotetramer and two H2A-H2B heterodimers. The octamer wraps approximately 147 bp of DNA. Post-translationally, can be acetylated to form H2BK6ac, H2BK11ac, H2BK22ac, H2BK27ac H2BK33ac and H2BK34ac. Mono-, di- or trimethylated at the N-terminus to form H2BA1me1/2/3. H2BA1me2 and H2BA1me3 may be methylated and/or acetylated to form H2BA1me2K3me1, H2BA1me2K3me1K6ac, H2BA1me2K6ac H2BA1me3K6ac, H2BA1me3K6acK11ac and H2BA1me2K3me1K6acK11ac. In terms of processing, monoubiquitinated by BRE1 to form H2BK143ub1 and deubiquitinated by UBP26. Required for heterochromatic histone H3 di- and trimethylation at H3K4me. May give a specific tag for epigenetic transcriptional activation.

Its subcellular location is the nucleus. It localises to the chromosome. In terms of biological role, core component of nucleosome. Nucleosomes wrap and compact DNA into chromatin, limiting DNA accessibility to the cellular machineries which require DNA as a template. Histones thereby play a central role in transcription regulation, DNA repair, DNA replication and chromosomal stability. DNA accessibility is regulated via a complex set of post-translational modifications of histones, also called histone code, and nucleosome remodeling. The protein is Histone H2B.7 of Arabidopsis thaliana (Mouse-ear cress).